The chain runs to 395 residues: HORMA domain-containing protein 1 (395 aa).

One can recognise an HORMA domain in the interval 24–226 (QQSLVLVKRL…TPFHTFKVKV (203 aa)). Positions 329 to 395 (DVSESKTRSG…RKFSEPKEYV (67 aa)) are disordered. The segment covering 344–353 (KMANGNQPVK) has biased composition (polar residues). Residues 354 to 363 (SSKENRKRNQ) are compositionally biased toward basic and acidic residues. Serine 377 carries the post-translational modification Phosphoserine. Residues 384-387 (KRRK) carry the Nuclear localization signal motif.

In terms of assembly, interacts with HORMAD2. Interacts with IHO1. Phosphorylated at Ser-378 in a SPO11-dependent manner.

It localises to the nucleus. Its subcellular location is the chromosome. In terms of biological role, plays a key role in meiotic progression. Regulates 3 different functions during meiosis: ensures that sufficient numbers of processed DNA double-strand breaks (DSBs) are available for successful homology search by increasing the steady-state numbers of single-stranded DSB ends. Promotes synaptonemal-complex formation independently of its role in homology search. Plays a key role in the male mid-pachytene checkpoint and the female meiotic prophase checkpoint: required for efficient build-up of ATR activity on unsynapsed chromosome regions, a process believed to form the basis of meiotic silencing of unsynapsed chromatin (MSUC) and meiotic prophase quality control in both sexes. This chain is HORMA domain-containing protein 1 (HORMAD1), found in Canis lupus familiaris (Dog).